Here is an 816-residue protein sequence, read N- to C-terminus: Phosphatidylinositol 4-kinase beta (816 aa).

The disordered stretch occupies residues 1–30; the sequence is MGDTVVEPTPLKPTSESTPGPAGSNGGSLL. Gly2 carries the N-acetylglycine modification. The tract at residues 2–68 is interaction with ACBD3; that stretch reads GDTVVEPTPL…VKLLHGGVAI (67 aa). One can recognise a PIK helical domain in the interval 52–242; the sequence is CQEVLEKVKL…GTKLRKLILS (191 aa). The segment at 248–318 is disordered; the sequence is AHRKRELPSL…TESIDNSFSS (71 aa). Ser258 is modified (phosphoserine). Thr263 carries the post-translational modification Phosphothreonine. Ser266, Ser275, Ser277, Ser284, and Ser294 each carry phosphoserine. 2 stretches are compositionally biased toward polar residues: residues 278 to 297 and 306 to 318; these read DATASISLSSNLKRTASNPK and SSSTESIDNSFSS. Ser428 bears the Phosphoserine mark. At Thr438 the chain carries Phosphothreonine. Residue Ser511 is modified to Phosphoserine. Thr517 and Thr519 each carry phosphothreonine. In terms of domain architecture, PI3K/PI4K catalytic spans 535 to 801; sequence EPWQEKVRRI…MVDGSMRSIT (267 aa). A G-loop region spans residues 541 to 547; it reads VRRIREG. The interval 668 to 676 is catalytic loop; it reads QVKDRHNGN. The segment at 687–711 is activation loop; that stretch reads HIDFGFILSSSPRNLGFETSAFKLT.

This sequence belongs to the PI3/PI4-kinase family. Type III PI4K subfamily. In terms of assembly, interacts with ARF1 and ARF3 in the Golgi complex, but not with ARF4, ARF5 or ARF6. Interacts with NCS1/FREQ in a calcium-independent manner. Interacts with CALN1/CABP8 and CALN2/CABP7; in a calcium-dependent manner; this interaction competes with NCS1/FREQ binding. Interacts with ACBD3. Interacts with ARMH3, YWHAB, YWHAE, YWHAG, YWHAH, YWHAQ, YWHAZ and SFN. Interacts with GGA2 (via VHS domain); the interaction is important for PI4KB location at the Golgi apparatus membrane. Interacts with ATG9A. It depends on Mg(2+) as a cofactor. Mn(2+) serves as cofactor.

It localises to the endomembrane system. Its subcellular location is the mitochondrion outer membrane. The protein resides in the rough endoplasmic reticulum membrane. The protein localises to the golgi apparatus. It is found in the golgi apparatus membrane. It catalyses the reaction a 1,2-diacyl-sn-glycero-3-phospho-(1D-myo-inositol) + ATP = a 1,2-diacyl-sn-glycero-3-phospho-(1D-myo-inositol 4-phosphate) + ADP + H(+). With respect to regulation, inhibited by wortmannin. Increased kinase activity upon interaction with NCS1/FREQ. Functionally, phosphorylates phosphatidylinositol (PI) in the first committed step in the production of the second messenger inositol-1,4,5,-trisphosphate (PIP). May regulate Golgi disintegration/reorganization during mitosis, possibly via its phosphorylation. Involved in Golgi-to-plasma membrane trafficking. May play an important role in the inner ear development. In Otolemur garnettii (Small-eared galago), this protein is Phosphatidylinositol 4-kinase beta (PI4KB).